The chain runs to 360 residues: E3 ubiquitin-protein ligase HAKAI homolog (360 aa).

Residues 1 to 11 show a composition bias toward basic and acidic residues; it reads MLQIRLRRDSP. Residues 1-24 form a disordered region; it reads MLQIRLRRDSPTETGNGARPSPTE. The RING-type zinc finger occupies 72–107; sequence CVRCDFPIAIYGRLIPCDHAFCLECARSDSICYLCD. Residues 123–148 form a C2H2-type zinc finger; it reads FICAAPHCLRSFLKKLDFEAHVHDLH. A disordered region spans residues 156 to 360; sequence AEKEDGNQSD…QENRDGFGQE (205 aa). Composition is skewed to polar residues over residues 163-179, 186-214, and 270-283; these read QSDV…SEST, SQLQ…QNYP, and YPTT…QFFN. The span at 293–304 shows a compositional bias: low complexity; sequence ESGGSEQSSLLG.

This sequence belongs to the Hakai family. As to quaternary structure, interacts with MTB and VIR. Associates with MTA, MTB, FIP37 and VIR to form the m6A writer complex which is essential for adenosine methylation at specific mRNA sequences.

The protein localises to the nucleus speckle. Its subcellular location is the nucleus. It localises to the nucleoplasm. The catalysed reaction is S-ubiquitinyl-[E2 ubiquitin-conjugating enzyme]-L-cysteine + [acceptor protein]-L-lysine = [E2 ubiquitin-conjugating enzyme]-L-cysteine + N(6)-ubiquitinyl-[acceptor protein]-L-lysine.. Functionally, probable E3 ubiquitin-protein ligase which is a subunit of the N6-methyltransferase complex, a multiprotein complex that mediates N6-methyladenosine (m6A) methylation at the 5'-[AG]GAC-3' consensus sites of some mRNAs. Associates with MTA, MTB, FIP37 and VIR to form the m6A writer complex which is essential for adenosine methylation at specific mRNA sequences. N6-methyladenosine (m6A) plays a role in mRNA stability, processing, translation efficiency and editing. This is E3 ubiquitin-protein ligase HAKAI homolog from Arabidopsis thaliana (Mouse-ear cress).